Consider the following 639-residue polypeptide: MGMAAEVRMVLYEDDSVQVHYACGSTLQLSPCGSEFLFEKALPPSTHPLEQPERIRQRTHFVISNYREQLQRALDFRNSSATCPFLSESIIPPERKKHIFIDFSEVEWPSLDRDDCIMYSESGVVKITSLDGHAYLCLPRSQHEFTVHFLCKVSQRPDSSGILSETQNQDPKNKLVEKTRKVCRCGNLSEQTLRNKENEPPYQILKSKNASVNTCCVNDSEGRGELPSLGTNHRCVYAWVKQAWSVAACPEAWKHPLSLALRFYNKVRAASEIDADFPASSIVTSDCPEERGTEVSVLPRALLLSCPAPHMHRWTFCDSLLQRQPDAEDFSYPELVKVVWYKGVTYRLTHKNVNSIEIFPGDGSVFKSEGAHFGNYFTYYPSQEESEKREEKTYSVNNLPPDRPGNFFSVRSLIKQATRILQHCAKIRLSLSHNYRVCCWKMAPGVSVSTILPVLLKESLIPGVGRFLAYSDDKVHAVFLDGVTVTLNWHLSSSAEKKQVDQGLSFGWCRLTFPDGQDQLIPTEHPGAYERYVTSVISWCRGLTQTSPRQVPTHLSPALKENWSVASELEKIQKFNWLLENSGVLNLTSSKNEQCSGHCKSGSSETLLEATNEERVSVALKRTSEILQDIDRLLSLSRK.

This is an uncharacterized protein from Mus musculus (Mouse).